The following is an 864-amino-acid chain: Xylosyltransferase 2 (864 aa).

Over 1-15 (MVASARVQKLVRRYK) the chain is Cytoplasmic. The helical; Signal-anchor for type II membrane protein transmembrane segment at 16 to 36 (LAIATALAILLLQGLVVWSFS) threads the bilayer. Residues 37–864 (GLEEDEPGEK…GPVKADGRLR (828 aa)) lie on the Lumenal side of the membrane. Disordered stretches follow at residues 39 to 123 (EEDE…RQNL) and 136 to 158 (AGFP…DNSF). A compositionally biased stretch (basic and acidic residues) spans 53 to 65 (RPLDPGEGSKDTD). Residues 73 to 82 (SAGRRHGRWR) show a composition bias toward basic residues. A glycan (N-linked (GlcNAc...) asparagine) is linked at asparagine 122. 4 disulfides stabilise this stretch: cysteine 162/cysteine 190, cysteine 206/cysteine 448, cysteine 467/cysteine 480, and cysteine 469/cysteine 478. UDP-alpha-D-xylose-binding positions include valine 239, aspartate 267, and 296-298 (TIW). Asparagine 327 carries N-linked (GlcNAc...) asparagine glycosylation. 400–401 (DW) is a UDP-alpha-D-xylose binding site. Residues serine 481 and 504 to 505 (RK) each bind UDP-alpha-D-xylose. 2 disulfide bridges follow: cysteine 580–cysteine 832 and cysteine 825–cysteine 838. Asparagine 682 carries N-linked (GlcNAc...) asparagine glycosylation.

The protein belongs to the glycosyltransferase 14 family. XylT subfamily. As to quaternary structure, monomer. Mg(2+) serves as cofactor. Mn(2+) is required as a cofactor. Contains disulfide bonds.

It is found in the golgi apparatus membrane. The protein localises to the secreted. It catalyses the reaction UDP-alpha-D-xylose + L-seryl-[protein] = 3-O-(beta-D-xylosyl)-L-seryl-[protein] + UDP + H(+). It participates in glycan metabolism; chondroitin sulfate biosynthesis. The protein operates within glycan metabolism; heparan sulfate biosynthesis. Catalyzes the first step in the biosynthesis of chondroitin sulfate, heparan sulfate and dermatan sulfate proteoglycans, such as DCN. Transfers D-xylose from UDP-D-xylose to specific serine residues of the core protein. The sequence is that of Xylosyltransferase 2 (Xylt2) from Rattus norvegicus (Rat).